The primary structure comprises 530 residues: Apolipoprotein N-acyltransferase (530 aa).

The next 6 helical transmembrane spans lie at 19 to 39 (LIAG…PGLL), 65 to 85 (WLAG…AFLV), 96 to 116 (FAVT…ALLY), 128 to 148 (LTFA…LTGF), 169 to 189 (LVGA…PAVW), and 197 to 217 (AATG…AIAL). One can recognise a CN hydrolase domain in the interval 232–485 (VQADIKQDLK…SGVIDAQIPG (254 aa)). Catalysis depends on Glu274, which acts as the Proton acceptor. Residue Lys343 is part of the active site. Cys396 acts as the Nucleophile in catalysis.

Belongs to the CN hydrolase family. Apolipoprotein N-acyltransferase subfamily.

The protein localises to the cell inner membrane. The enzyme catalyses N-terminal S-1,2-diacyl-sn-glyceryl-L-cysteinyl-[lipoprotein] + a glycerophospholipid = N-acyl-S-1,2-diacyl-sn-glyceryl-L-cysteinyl-[lipoprotein] + a 2-acyl-sn-glycero-3-phospholipid + H(+). The protein operates within protein modification; lipoprotein biosynthesis (N-acyl transfer). Catalyzes the phospholipid dependent N-acylation of the N-terminal cysteine of apolipoprotein, the last step in lipoprotein maturation. The chain is Apolipoprotein N-acyltransferase from Caulobacter vibrioides (strain ATCC 19089 / CIP 103742 / CB 15) (Caulobacter crescentus).